The sequence spans 171 residues: Transcription factor pcr1 (171 aa).

In terms of domain architecture, bZIP spans 10-73; the sequence is DEKRRRILER…FRLKSQLLAH (64 aa). The tract at residues 12-51 is basic motif; it reads KRRRILERNRIAASKFRQKKKEWIKELEQTANAAFEQSKR. Positions 52–66 are leucine-zipper; sequence LQLLLSQLQQEAFRL. The segment at 125-171 is disordered; it reads QMHPSLQGLPPNQHPQMPPSSQQPNSDDVQQHMFSAAGLPRSLGGPI. Over residues 143-152 the composition is skewed to low complexity; sequence PSSQQPNSDD.

This sequence belongs to the bZIP family. In terms of assembly, heterodimer of pcr1/mts2 and atf1/mts1.

It localises to the nucleus. Its function is as follows. Involved in regulation of gene expression for sexual development. Binds and activates CRE sites (cAMP-response elements, also known as M26 meiotic recombination hotspots). The chain is Transcription factor pcr1 (pcr1) from Schizosaccharomyces pombe (strain 972 / ATCC 24843) (Fission yeast).